A 172-amino-acid chain; its full sequence is Ribosome maturation factor RimM (172 aa).

One can recognise a PRC barrel domain in the interval 96–168 (EGEFYYHQII…RVDVELMEGL (73 aa)).

Belongs to the RimM family. As to quaternary structure, binds ribosomal protein uS19.

Its subcellular location is the cytoplasm. Its function is as follows. An accessory protein needed during the final step in the assembly of 30S ribosomal subunit, possibly for assembly of the head region. Essential for efficient processing of 16S rRNA. May be needed both before and after RbfA during the maturation of 16S rRNA. It has affinity for free ribosomal 30S subunits but not for 70S ribosomes. This is Ribosome maturation factor RimM from Streptococcus pyogenes serotype M28 (strain MGAS6180).